The primary structure comprises 400 residues: 1-deoxy-D-xylulose 5-phosphate reductoisomerase (400 aa).

Residues T10, G11, S12, I13, G36, N38, and N124 each contribute to the NADPH site. K125 contributes to the 1-deoxy-D-xylulose 5-phosphate binding site. E126 serves as a coordination point for NADPH. D150 provides a ligand contact to Mn(2+). Residues S151, E152, S186, and H209 each coordinate 1-deoxy-D-xylulose 5-phosphate. Position 152 (E152) interacts with Mn(2+). G215 contacts NADPH. 1-deoxy-D-xylulose 5-phosphate is bound by residues S222, N227, K228, and E231. Residue E231 coordinates Mn(2+).

It belongs to the DXR family. The cofactor is Mg(2+). Requires Mn(2+) as cofactor.

It carries out the reaction 2-C-methyl-D-erythritol 4-phosphate + NADP(+) = 1-deoxy-D-xylulose 5-phosphate + NADPH + H(+). Its pathway is isoprenoid biosynthesis; isopentenyl diphosphate biosynthesis via DXP pathway; isopentenyl diphosphate from 1-deoxy-D-xylulose 5-phosphate: step 1/6. In terms of biological role, catalyzes the NADPH-dependent rearrangement and reduction of 1-deoxy-D-xylulose-5-phosphate (DXP) to 2-C-methyl-D-erythritol 4-phosphate (MEP). The chain is 1-deoxy-D-xylulose 5-phosphate reductoisomerase from Aliivibrio fischeri (strain MJ11) (Vibrio fischeri).